Here is a 377-residue protein sequence, read N- to C-terminus: DNA dC-&gt;dU-editing enzyme APOBEC-3G (377 aa).

The interval 1 to 60 (MNPQIRNMVEQMEPDIFVYYFNNRPILSGRNTVWLCYEVKTKDPSGPPLDANIFQGKLYP) is essential for cytoplasmic localization. CMP/dCMP-type deaminase domains lie at 29-138 (GRNT…LRIL) and 214-327 (GQRE…LRTL). Thr-32 carries the post-translational modification Phosphothreonine; by PKA. 3 residues coordinate Zn(2+): His-65, Cys-97, and Cys-100. The tract at residues 209–335 (KPWVSGQRET…TLHRDGAKIA (127 aa)) is necessary for homooligomerization. Residues 213–215 (SGQ) form an interaction with DNA region. Position 218 is a phosphothreonine; by PKA and CAMK2 (Thr-218). His-257 serves as a coordination point for Zn(2+). The Proton donor role is filled by Glu-259. Positions 287 and 290 each coordinate Zn(2+). The tract at residues 312 to 319 (RIYDDQGR) is interaction with DNA.

The protein belongs to the cytidine and deoxycytidylate deaminase family. As to quaternary structure, homodimer. Homooligomer. Can bind RNA to form ribonucleoprotein complexes of high-molecular-mass (HMM) or low-molecular-mass (LMM). HMM is inactive and heterogeneous in protein composition because of binding nonselectively to cellular RNAs, which in turn are associated with variety of cellular proteins. The LMM form which is enzymatically active has few or no RNAs associated. Its ability to form homooligomer is distinct from its ability to assemble into HMM. Interacts with APOBEC3B, APOBEC3F, MOV10, AGO2, EIF4E, EIF4ENIF1, DCP2 and DDX6 in an RNA-dependent manner. Interacts with AGO1, AGO3 and PKA/PRKACA. Requires Zn(2+) as cofactor.

It localises to the cytoplasm. The protein localises to the nucleus. It is found in the P-body. The catalysed reaction is a 2'-deoxycytidine in single-stranded DNA + H2O + H(+) = a 2'-deoxyuridine in single-stranded DNA + NH4(+). DNA deaminase (cytidine deaminase) which acts as an inhibitor of retrovirus replication and retrotransposon mobility via deaminase-dependent and -independent mechanisms. Exhibits antiviral activity against vif-deficient: HIV-1 and simian immunodeficiency viruses (SIVs) and also simian foamy virus (SFV). After the penetration of retroviral nucleocapsids into target cells of infection and the initiation of reverse transcription, it can induce the conversion of cytosine to uracil in the minus-sense single-strand viral DNA, leading to G-to-A hypermutations in the subsequent plus-strand viral DNA. The resultant detrimental levels of mutations in the proviral genome, along with a deamination-independent mechanism that works prior to the proviral integration, together exert efficient antiretroviral effects in infected target cells. Selectively targets single-stranded DNA and does not deaminate double-stranded DNA or single- or double-stranded RNA. May inhibit the mobility of LTR retrotransposons. The sequence is that of DNA dC-&gt;dU-editing enzyme APOBEC-3G (APOBEC3G) from Chlorocebus aethiops (Green monkey).